We begin with the raw amino-acid sequence, 859 residues long: Fanconi anemia group B protein (859 aa).

T2 carries the N-acetylthreonine modification.

As to quaternary structure, belongs to the multisubunit FA complex composed of FANCA, FANCB, FANCC, FANCE, FANCF, FANCG, FANCL/PHF9 and FANCM. The complex is not found in FA patients.

It is found in the nucleus. Functionally, DNA repair protein required for FANCD2 ubiquitination. The protein is Fanconi anemia group B protein (FANCB) of Homo sapiens (Human).